The primary structure comprises 523 residues: 2-isopropylmalate synthase (523 aa).

The 263-residue stretch at 5–267 folds into the Pyruvate carboxyltransferase domain; that stretch reads VIIFDTTLRD…HTRINHQEIW (263 aa). Positions 14, 202, 204, and 238 each coordinate Mn(2+). The interval 392–523 is regulatory domain; that stretch reads RLEYFSVQSG…QNKEHNQETV (132 aa).

Belongs to the alpha-IPM synthase/homocitrate synthase family. LeuA type 1 subfamily. In terms of assembly, homodimer. The cofactor is Mn(2+).

Its subcellular location is the cytoplasm. It carries out the reaction 3-methyl-2-oxobutanoate + acetyl-CoA + H2O = (2S)-2-isopropylmalate + CoA + H(+). The protein operates within amino-acid biosynthesis; L-leucine biosynthesis; L-leucine from 3-methyl-2-oxobutanoate: step 1/4. In terms of biological role, catalyzes the condensation of the acetyl group of acetyl-CoA with 3-methyl-2-oxobutanoate (2-ketoisovalerate) to form 3-carboxy-3-hydroxy-4-methylpentanoate (2-isopropylmalate). This is 2-isopropylmalate synthase from Cronobacter sakazakii (strain ATCC BAA-894) (Enterobacter sakazakii).